Here is a 288-residue protein sequence, read N- to C-terminus: 33 kDa chaperonin (288 aa).

Disulfide bonds link C235–C237 and C268–C271.

Belongs to the HSP33 family. In terms of processing, under oxidizing conditions two disulfide bonds are formed involving the reactive cysteines. Under reducing conditions zinc is bound to the reactive cysteines and the protein is inactive.

It is found in the cytoplasm. In terms of biological role, redox regulated molecular chaperone. Protects both thermally unfolding and oxidatively damaged proteins from irreversible aggregation. Plays an important role in the bacterial defense system toward oxidative stress. This chain is 33 kDa chaperonin, found in Streptococcus thermophilus (strain ATCC BAA-491 / LMD-9).